We begin with the raw amino-acid sequence, 416 residues long: Tiggy-winkle hedgehog protein (416 aa).

Positions 1–26 (MDVRLHLKQFALLCFISLLLTPCGLA) are cleaved as a signal peptide. C27 is lipidated: N-palmitoyl cysteine. E92, E93, D98, T128, E129, D132, and D134 together coordinate Ca(2+). Residues H143, D150, and H185 each coordinate Zn(2+). The Cholesterol glycine ester moiety is linked to residue G200.

This sequence belongs to the hedgehog family. In terms of assembly, multimer. As to quaternary structure, interacts with HHATL/GUP1 which negatively regulates HHAT-mediated palmitoylation of the TWHH N-terminus. Interacts with BOC and CDON. Interacts with HHIP. Interacts with DISP1 via its cholesterol anchor. Interacts with SCUBE2. In terms of processing, the C-terminal domain displays an autoproteolysis activity and a cholesterol transferase activity. Both activities result in the cleavage of the full-length protein into two parts (N-product and C-product) followed by the covalent attachment of a cholesterol moiety to the C-terminal of the newly generated N-product. Cholesterylation is required for the tiggy-winkle hedgehog protein N-product targeting to lipid rafts and multimerization. N-product is the active species in both local and long-range signaling, whereas the C-product is degraded in the endoplasmic reticulum. N-palmitoylation by HHAT of N-product is required for tiggy-winkle hedgehog protein N-product multimerization and full activity. It is a prerequisite for the membrane-proximal positioning and the subsequent shedding of this N-terminal peptide. Post-translationally, the lipidated N- and C-terminal peptides of N-product can be cleaved (shedding). The N-terminal palmitoylated peptide is cleaved at the Cardin-Weintraub (CW) motif site. The cleavage reduced the interactions with heparan sulfate. The cleavage is enhanced by SCUBE2. In terms of tissue distribution, expressed in the ventral midline of the neural tube and brain. In the developing brain, expression occurs in domains that include a discrete region in the floor of the diencephalon. Not detected in the notochord or developing fin bud.

It localises to the cell membrane. Its subcellular location is the endoplasmic reticulum membrane. The protein resides in the golgi apparatus membrane. In terms of biological role, the C-terminal part of the tiggy-winkle hedgehog protein precursor displays an autoproteolysis and a cholesterol transferase activity. Both activities result in the cleavage of the full-length protein into two parts (N-product and C-product) followed by the covalent attachment of a cholesterol moiety to the C-terminal of the newly generated N-product. Both activities occur in the endoplasmic reticulum. Once cleaved, the C-product is degraded in the endoplasmic reticulum. Its function is as follows. The dually lipidated tiggy-winkle hedgehog protein N-product is a morphogen which is essential for a variety of patterning events during development. Involved in dorso-ventral patterning of the brain and in early patterning of the developing eyes. Binds to the patched (PTCH1) receptor, which functions in association with smoothened (SMO), to activate the transcription of target genes. This is Tiggy-winkle hedgehog protein (shhb) from Danio rerio (Zebrafish).